Here is a 146-residue protein sequence, read N- to C-terminus: Hemoglobin subunit beta (146 aa).

V1 carries the N-acetylvaline modification. One can recognise a Globin domain in the interval 2-146 (QLSGEEKAAV…VANALAHKYH (145 aa)). A Phosphoserine modification is found at S44. K59 carries the post-translational modification N6-acetyllysine. H63 is a binding site for heme b. K82 carries the N6-acetyllysine modification. H92 is a binding site for heme b. At C93 the chain carries S-nitrosocysteine. An N6-acetyllysine modification is found at K144.

This sequence belongs to the globin family. Heterotetramer of two alpha chains and two beta chains. In terms of tissue distribution, red blood cells.

Involved in oxygen transport from the lung to the various peripheral tissues. The sequence is that of Hemoglobin subunit beta (HBB) from Equus caballus (Horse).